The primary structure comprises 173 residues: uncharacterized protein (173 aa).

A run of 4 helical transmembrane segments spans residues 13–35 (LQVILKFFFALLCFCIILFPLLS), 50–72 (IIFIYYFMSLYSLNIFSIFFLGL), 107–129 (NYLINFVVFCFYCLFILNFKYLL), and 139–161 (GYLIIFFQSLTTIFSYNIIRLIL).

It is found in the cell membrane. This is an uncharacterized protein from Rickettsia prowazekii (strain Madrid E).